We begin with the raw amino-acid sequence, 246 residues long: NAD-dependent protein deacylase (246 aa).

Positions 1–245 constitute a Deacetylase sirtuin-type domain; it reads MKEFITKHRD…ELIREILDNP (245 aa). 20–39 provides a ligand contact to NAD(+); that stretch reads GAGISAESGIPTFRGSEGLW. Positions 64 and 67 each coordinate substrate. 98-101 contributes to the NAD(+) binding site; the sequence is QNVD. Catalysis depends on His-116, which acts as the Proton acceptor. Positions 124, 127, 146, and 149 each coordinate Zn(2+). Residues 186–188, 212–214, and Thr-230 contribute to the NAD(+) site; these read GTS and NPE.

Belongs to the sirtuin family. Class III subfamily. The cofactor is Zn(2+).

The protein localises to the cytoplasm. It carries out the reaction N(6)-acetyl-L-lysyl-[protein] + NAD(+) + H2O = 2''-O-acetyl-ADP-D-ribose + nicotinamide + L-lysyl-[protein]. It catalyses the reaction N(6)-succinyl-L-lysyl-[protein] + NAD(+) + H2O = 2''-O-succinyl-ADP-D-ribose + nicotinamide + L-lysyl-[protein]. Its function is as follows. NAD-dependent lysine deacetylase and desuccinylase that specifically removes acetyl and succinyl groups on target proteins. Modulates the activities of several proteins which are inactive in their acylated form. The chain is NAD-dependent protein deacylase from Leptospira interrogans serogroup Icterohaemorrhagiae serovar copenhageni (strain Fiocruz L1-130).